Here is a 261-residue protein sequence, read N- to C-terminus: Methyl jasmonate esterase 1 (261 aa).

The AB hydrolase-1 domain occupies F8–A251. S82 functions as the Acyl-ester intermediate in the catalytic mechanism. Residues D211 and H239 each act as charge relay system in the active site.

The protein belongs to the AB hydrolase superfamily. Methylesterase family. In terms of assembly, homodimer.

It catalyses the reaction methyl (-)-jasmonate + H2O = jasmonate + methanol + H(+). The enzyme catalyses methyl salicylate + H2O = salicylate + methanol + H(+). Its pathway is plant hormone biosynthesis. It participates in lipid metabolism; oxylipin biosynthesis. In terms of biological role, methylesterase that catalyzes the hydrolysis of methyl jasmonate (MeJA) into jasmonate (JA). Can also use methyl salicylate (MeSA) as substrate with a lower efficiency. In Vitis vinifera (Grape), this protein is Methyl jasmonate esterase 1.